The chain runs to 585 residues: Arginine--tRNA ligase (585 aa).

The short motif at 127 to 137 (PNTNKPLHVGH) is the 'HIGH' region element.

It belongs to the class-I aminoacyl-tRNA synthetase family. In terms of assembly, monomer.

Its subcellular location is the cytoplasm. It carries out the reaction tRNA(Arg) + L-arginine + ATP = L-arginyl-tRNA(Arg) + AMP + diphosphate. In Borreliella burgdorferi (strain ATCC 35210 / DSM 4680 / CIP 102532 / B31) (Borrelia burgdorferi), this protein is Arginine--tRNA ligase (argS).